The primary structure comprises 107 residues: Nitrogenase-stabilizing/protective protein NifW (107 aa).

This sequence belongs to the NifW family. Homotrimer; associates with NifD.

May protect the nitrogenase Fe-Mo protein from oxidative damage. The polypeptide is Nitrogenase-stabilizing/protective protein NifW (Gloeothece citriformis (strain PCC 7424) (Cyanothece sp. (strain PCC 7424))).